Consider the following 596-residue polypeptide: Putative terpene synthase 3, chloroplastic (596 aa).

Residues 1–46 constitute a chloroplast transit peptide; the sequence is MATLSMQVSTLSKQVKNLNTFGMGSASKLPMVARRVSTIRLRPICS. Mn(2+)-binding residues include Asp349 and Asp353. The short motif at 349-353 is the DDXXD motif element; the sequence is DDVYD. 2 homodimerization regions span residues 355–361 and 427–464; these read YGTLDEL and EAKW…FTLP. Residues Asp493 and Glu501 each contribute to the Mn(2+) site.

The protein belongs to the terpene synthase family. In terms of assembly, homodimer. Mn(2+) is required as a cofactor. Requires Mg(2+) as cofactor.

The protein resides in the plastid. Its subcellular location is the chloroplast. It participates in secondary metabolite biosynthesis; terpenoid biosynthesis. Its function is as follows. Putative monoterpene synthase. The protein is Putative terpene synthase 3, chloroplastic of Thymus vulgaris (Thyme).